Consider the following 368-residue polypeptide: tRNA(Met) cytidine acetate ligase (368 aa).

ATP-binding positions include 7–20 (IAEF…HKYL), G96, N152, and R175.

Belongs to the TmcAL family.

Its subcellular location is the cytoplasm. It carries out the reaction cytidine(34) in elongator tRNA(Met) + acetate + ATP = N(4)-acetylcytidine(34) in elongator tRNA(Met) + AMP + diphosphate. Catalyzes the formation of N(4)-acetylcytidine (ac(4)C) at the wobble position of elongator tRNA(Met), using acetate and ATP as substrates. First activates an acetate ion to form acetyladenylate (Ac-AMP) and then transfers the acetyl group to tRNA to form ac(4)C34. This is tRNA(Met) cytidine acetate ligase from Streptococcus pyogenes serotype M4 (strain MGAS10750).